A 289-amino-acid chain; its full sequence is Borealin (289 aa).

The required for interaction with INCENP stretch occupies residues 1–58 (MAPKKRSSRGTRTNTLRSRKLASFLKDFDREVQVRTKQIESDRQTLLKEVENLYNIEI). The segment at 1–88 (MAPKKRSSRG…NKQALEEAAK (88 aa)) is required for centromere localization. Residues 1 to 150 (MAPKKRSSRG…KKSHKNLRSA (150 aa)) are required for interaction with SENP3. The interval 10–109 (GTRTNTLRSR…TAEAIQTPLK (100 aa)) is required to form a minimal CPC core complex that localizes to the central spindle and midbody and properly executes the role of the CPC during cytokinesis. Residues 20 to 78 (KLASFLKDFDREVQVRTKQIESDRQTLLKEVENLYNIEILRLPKALQGMKWLDYFALGG) form a required for interaction with INCENP and BIRC5 region. Arg-91 bears the Citrulline mark. Thr-94 is modified (phosphothreonine; by TTK). Thr-106 bears the Phosphothreonine mark. Ser-110 is subject to Phosphoserine. The tract at residues 122-173 (SIKEEEEEEEEGGGGGGRTKKSHKNLRSAKVKRCLPSKKRTQSIQGRGRSKR) is disordered. Residues 123–133 (IKEEEEEEEEG) are compositionally biased toward acidic residues. Over residues 139-162 (RTKKSHKNLRSAKVKRCLPSKKRT) the composition is skewed to basic residues. Lys-145 participates in a covalent cross-link: Glycyl lysine isopeptide (Lys-Gly) (interchain with G-Cter in SUMO2). Ser-175 carries the phosphoserine modification. 2 positions are modified to phosphothreonine: Thr-198 and Thr-213. Residues Ser-228, Ser-233, Ser-247, and Ser-253 each carry the phosphoserine modification.

This sequence belongs to the borealin family. As to quaternary structure, may form homooligomers and homodimers. Component of the chromosomal passenger complex (CPC) composed of at least BIRC5/survivin, CDCA8/borealin, INCENP, AURKB or AURKC; in the complex forms a triple-helix bundle-based subcomplex with INCENP and BIRC5. Interacts with SENP3, UBE2I and RANBP2. Interacts (phosphorylated) with SGO1 and SGO2A; the association is dependent on CDK1. Phosphorylated by TTK, essentially at Thr-94. Phosphorylation (probably by CDK1) promotes targeting of the CPC to centromeric DNA. In terms of processing, sumoylated by UBE2I and RANBP2. Desumoylated by SENP3 through the removal of SUMO2 and SUMO3. Post-translationally, citrullinated by PADI4.

The protein localises to the nucleus. It is found in the nucleolus. Its subcellular location is the cytoplasm. The protein resides in the chromosome. It localises to the centromere. The protein localises to the cytoskeleton. It is found in the spindle. Functionally, component of the chromosomal passenger complex (CPC), a complex that acts as a key regulator of mitosis. The CPC complex has essential functions at the centromere in ensuring correct chromosome alignment and segregation and is required for chromatin-induced microtubule stabilization and spindle assembly. In the complex, it may be required to direct the CPC to centromeric DNA. Major effector of the TTK kinase in the control of attachment-error-correction and chromosome alignment. The sequence is that of Borealin (Cdca8) from Mus musculus (Mouse).